The chain runs to 460 residues: Sexual development regulator velC (460 aa).

Disordered regions lie at residues 67 to 131 (VGPD…PQAP), 152 to 216 (YAPR…RPDP), and 422 to 460 (KKGN…SARQ). Residues 192 to 207 (PVTTNGRPPDSNSPMV) show a composition bias toward polar residues. Residues 239–422 (LSDNRFNLQI…KEQGCIISIK (184 aa)) enclose the Velvet domain. The segment covering 423-437 (KGNDRSKNTRSHDDS) has biased composition (basic and acidic residues). Over residues 451 to 460 (GKRRRRSARQ) the composition is skewed to basic residues.

It belongs to the velvet family. VelC subfamily. In terms of assembly, interacts with VE1.

The protein localises to the nucleus. Functionally, velvet-domain-containing protein that acts as a positive regulator of sexual development. Dispensable for regulation of conidial size, hyphal hydrophobicity, fumonisin production, and oxidant resistance. The polypeptide is Sexual development regulator velC (Gibberella moniliformis (strain M3125 / FGSC 7600) (Maize ear and stalk rot fungus)).